The primary structure comprises 35 residues: Probable endonuclease 4 (35 aa).

Residue E15 coordinates Zn(2+).

It belongs to the AP endonuclease 2 family. It depends on Zn(2+) as a cofactor.

It carries out the reaction Endonucleolytic cleavage to 5'-phosphooligonucleotide end-products.. Functionally, endonuclease IV plays a role in DNA repair. It cleaves phosphodiester bonds at apurinic or apyrimidinic (AP) sites, generating a 3'-hydroxyl group and a 5'-terminal sugar phosphate. The protein is Probable endonuclease 4 (nfo) of Yersinia enterocolitica.